The sequence spans 251 residues: Triosephosphate isomerase (251 aa).

9–11 (NWK) contributes to the substrate binding site. Catalysis depends on histidine 95, which acts as the Electrophile. Catalysis depends on glutamate 167, which acts as the Proton acceptor. Substrate is bound by residues glycine 173, serine 213, and 234–235 (GG).

The protein belongs to the triosephosphate isomerase family. In terms of assembly, homodimer.

It is found in the cytoplasm. It carries out the reaction D-glyceraldehyde 3-phosphate = dihydroxyacetone phosphate. It functions in the pathway carbohydrate biosynthesis; gluconeogenesis. Its pathway is carbohydrate degradation; glycolysis; D-glyceraldehyde 3-phosphate from glycerone phosphate: step 1/1. Its function is as follows. Involved in the gluconeogenesis. Catalyzes stereospecifically the conversion of dihydroxyacetone phosphate (DHAP) to D-glyceraldehyde-3-phosphate (G3P). In Trichlorobacter lovleyi (strain ATCC BAA-1151 / DSM 17278 / SZ) (Geobacter lovleyi), this protein is Triosephosphate isomerase.